Consider the following 662-residue polypeptide: DNA ligase (662 aa).

NAD(+) contacts are provided by residues 34–38 (DYEYD), 83–84 (SI), and Glu113. Lys115 serves as the catalytic N6-AMP-lysine intermediate. Residues Arg136, Glu172, Lys286, and Lys310 each contribute to the NAD(+) site. Zn(2+) is bound by residues Cys404, Cys407, Cys422, and Cys427. The BRCT domain maps to 583–662 (KSGSTCFGKA…EAFTNLIHLE (80 aa)).

The protein belongs to the NAD-dependent DNA ligase family. LigA subfamily. Mg(2+) serves as cofactor. The cofactor is Mn(2+).

The catalysed reaction is NAD(+) + (deoxyribonucleotide)n-3'-hydroxyl + 5'-phospho-(deoxyribonucleotide)m = (deoxyribonucleotide)n+m + AMP + beta-nicotinamide D-nucleotide.. Its function is as follows. DNA ligase that catalyzes the formation of phosphodiester linkages between 5'-phosphoryl and 3'-hydroxyl groups in double-stranded DNA using NAD as a coenzyme and as the energy source for the reaction. It is essential for DNA replication and repair of damaged DNA. This is DNA ligase from Chlamydia pneumoniae (Chlamydophila pneumoniae).